We begin with the raw amino-acid sequence, 250 residues long: Ribonucleotide monophosphatase NagD (250 aa).

Mg(2+) contacts are provided by Asp9 and Asp11. Residue Asp11 is part of the active site. Residues Asp11, Thr42–Asn43, and Lys176 each bind substrate. Asp201 contributes to the Mg(2+) binding site. A substrate-binding site is contributed by Asn202–Thr205.

It belongs to the HAD-like hydrolase superfamily. NagD family. As to quaternary structure, monomer. It depends on Mg(2+) as a cofactor. Requires Mn(2+) as cofactor. The cofactor is Co(2+). Zn(2+) serves as cofactor.

It carries out the reaction a ribonucleoside 5'-phosphate + H2O = a ribonucleoside + phosphate. Its function is as follows. Catalyzes the dephosphorylation of an unusually broad range of substrate including deoxyribo- and ribonucleoside tri-, di-, and monophosphates, as well as polyphosphate and glucose-1-P (Glu1P). The protein is Ribonucleotide monophosphatase NagD (nagD) of Escherichia coli O157:H7.